The primary structure comprises 457 residues: Putative hexose transporter 12 (457 aa).

Topologically, residues 1–2 (MG) are cytoplasmic. Residues 3 to 23 (LIVSIFNIGCAIGGIVLSKVG) form a helical membrane-spanning segment. Residues 24–29 (DIYGRR) lie on the Extracellular side of the membrane. A helical membrane pass occupies residues 30-50 (IGLITVTAIYVVGILIQITSI). Residues 51–60 (NKWYQYFIGR) are Cytoplasmic-facing. The chain crosses the membrane as a helical span at residues 61 to 81 (IISGIGVGGIAVLSPMLISEV). Residues 82–87 (APKHIR) are Extracellular-facing. Residues 88–108 (GTLVQLYQLMGTMGIFLGYCT) form a helical membrane-spanning segment. At 109 to 122 (NYGTKNYHNATQWR) the chain is on the cytoplasmic side. The chain crosses the membrane as a helical span at residues 123–143 (VGLGLCFAWATFMVSGMMFVP). The Extracellular segment spans residues 144-247 (ESPRYLIEVG…KSVGLKDSFQ (104 aa)). The N-linked (GlcNAc...) asparagine glycan is linked to Asn-194. The helical transmembrane segment at 248–268 (TSIIIGVVNFFSSFIAVYTIE) threads the bilayer. The Cytoplasmic segment spans residues 269-274 (RFGRRT). Residues 275–295 (CLLWGAASMLCCFAVFASVGV) traverse the membrane as a helical segment. The Extracellular portion of the chain corresponds to 296 to 319 (TKLWPQGSSHQDITSQGAGNCMIV). A helical membrane pass occupies residues 320-340 (FTMFFIFSFATTWAGGCFVIV). Residues 341–353 (SETFPLRAKSRGM) are Cytoplasmic-facing. The chain crosses the membrane as a helical span at residues 354–374 (AIATAANWMWGFLISFFTPFI). The Extracellular segment spans residues 375–379 (TGAIN). Residues 380–400 (FYYGYVFLGCLVFAYFYVFFF) traverse the membrane as a helical segment. Residues 401 to 457 (VPETKGLTLEEVNTMWLEGVPAWKSASWVPPERRTADYDADAIDHDNRPIYKRFFSS) lie on the Cytoplasmic side of the membrane.

Belongs to the major facilitator superfamily. Sugar transporter (TC 2.A.1.1) family.

The protein localises to the membrane. Probable glucose transporter. The chain is Putative hexose transporter 12 (HXT12) from Saccharomyces cerevisiae (strain ATCC 204508 / S288c) (Baker's yeast).